The chain runs to 914 residues: Effector protein hopAE1 (914 aa).

A compositionally biased stretch (polar residues) spans 1–13; that stretch reads MMPSQITRSSHSS. A disordered region spans residues 1 to 31; it reads MMPSQITRSSHSSLPEVAPASGDAAGVSEQT.

This sequence belongs to the HopW family.

The protein localises to the secreted. This chain is Effector protein hopAE1 (hopAE1), found in Pseudomonas syringae pv. syringae (strain B728a).